A 238-amino-acid polypeptide reads, in one-letter code: MRSDGREAGSLRGINITRHYIKHAEGAVLVEFGDTKVICTASVEESVPPFLRGKGTGWVTAEYSMLPRSTHTRSSREAARGKIGGRTHEIQRLIGRSLRAVTDLTLLGERSVLIDCDVIQADGGTRTASITGAYVALVDALHLLVERGVLPLLPIKEAVAAVSVGIVDGNILLDLNYVEDSAAEVDMNFVMTSSDRFVEVQGTAESEPFTVEQMDGMRVAAVEGIRKLFSIQNEALSR.

Phosphate is bound by residues Arg-86 and 124–126; that span reads GTR.

Belongs to the RNase PH family. Homohexameric ring arranged as a trimer of dimers.

The catalysed reaction is tRNA(n+1) + phosphate = tRNA(n) + a ribonucleoside 5'-diphosphate. Phosphorolytic 3'-5' exoribonuclease that plays an important role in tRNA 3'-end maturation. Removes nucleotide residues following the 3'-CCA terminus of tRNAs; can also add nucleotides to the ends of RNA molecules by using nucleoside diphosphates as substrates, but this may not be physiologically important. Probably plays a role in initiation of 16S rRNA degradation (leading to ribosome degradation) during starvation. This Geobacter metallireducens (strain ATCC 53774 / DSM 7210 / GS-15) protein is Ribonuclease PH.